Consider the following 425-residue polypeptide: Serine hydroxymethyltransferase (425 aa).

Residues L124 and 128–130 (GHL) contribute to the (6S)-5,6,7,8-tetrahydrofolate site. An N6-(pyridoxal phosphate)lysine modification is found at K233.

This sequence belongs to the SHMT family. Homodimer. It depends on pyridoxal 5'-phosphate as a cofactor.

The protein resides in the cytoplasm. The catalysed reaction is (6R)-5,10-methylene-5,6,7,8-tetrahydrofolate + glycine + H2O = (6S)-5,6,7,8-tetrahydrofolate + L-serine. It functions in the pathway one-carbon metabolism; tetrahydrofolate interconversion. The protein operates within amino-acid biosynthesis; glycine biosynthesis; glycine from L-serine: step 1/1. In terms of biological role, catalyzes the reversible interconversion of serine and glycine with tetrahydrofolate (THF) serving as the one-carbon carrier. This reaction serves as the major source of one-carbon groups required for the biosynthesis of purines, thymidylate, methionine, and other important biomolecules. Also exhibits THF-independent aldolase activity toward beta-hydroxyamino acids, producing glycine and aldehydes, via a retro-aldol mechanism. This is Serine hydroxymethyltransferase from Clavibacter michiganensis subsp. michiganensis (strain NCPPB 382).